Consider the following 213-residue polypeptide: Thymidylate kinase (213 aa).

10 to 17 serves as a coordination point for ATP; the sequence is GPDGAGKT.

Belongs to the thymidylate kinase family.

The catalysed reaction is dTMP + ATP = dTDP + ADP. In terms of biological role, phosphorylation of dTMP to form dTDP in both de novo and salvage pathways of dTTP synthesis. This chain is Thymidylate kinase, found in Limosilactobacillus reuteri (strain DSM 20016) (Lactobacillus reuteri).